The sequence spans 358 residues: Chitin synthase export chaperone (358 aa).

Transmembrane regions (helical) follow at residues 49–69, 88–108, 117–137, 159–179, 185–205, 220–240, and 250–270; these read IIFQGAASVMHIVALVMTVVM, FFYLYMILTFLSLCIDAGVIP, FVAVQAGLASALVTCLVINGF, FVAFVISFLVGLATFKSWAGL, VGIFVVLYFLNALQLLLYVVM, LGDIAFGLFFFIAGQVILYAF, and HYLDGLFFATTCNLLAVMMVY. The tract at residues 321–358 is disordered; it reads ASGPGTGSGASASGYEGGHHRRESHGYTPSPNRQSLRY. Residues 347-358 show a composition bias toward polar residues; the sequence is YTPSPNRQSLRY.

Belongs to the CHS7 family. Interacts with chs-3.

The protein localises to the endoplasmic reticulum membrane. In terms of biological role, chaperone required for the export of the chitin synthase chs-3 from the endoplasmic reticulum. The protein is Chitin synthase export chaperone (csc-1) of Neurospora crassa (strain ATCC 24698 / 74-OR23-1A / CBS 708.71 / DSM 1257 / FGSC 987).